The chain runs to 199 residues: Chaperone protein TorD (199 aa).

Belongs to the TorD/DmsD family. TorD subfamily.

The protein resides in the cytoplasm. In terms of biological role, involved in the biogenesis of TorA. Acts on TorA before the insertion of the molybdenum cofactor and, as a result, probably favors a conformation of the apoenzyme that is competent for acquiring the cofactor. The polypeptide is Chaperone protein TorD (Escherichia coli O6:H1 (strain CFT073 / ATCC 700928 / UPEC)).